The following is a 348-amino-acid chain: Centromere protein L (348 aa).

Belongs to the CENP-L/IML3 family.

It localises to the nucleus. It is found in the chromosome. The protein resides in the centromere. Its function is as follows. Probable component of a centromeric complex involved in assembly of kinetochore proteins, mitotic progression and chromosome segregation. In Xenopus tropicalis (Western clawed frog), this protein is Centromere protein L (cenpl).